Here is a 599-residue protein sequence, read N- to C-terminus: Elongation factor 4 (599 aa).

The tr-type G domain maps to 5-187 (NHIRNFSIIA…QIVQLVPPPE (183 aa)). Residues 17–22 (DHGKST) and 134–137 (NKMD) each bind GTP.

This sequence belongs to the TRAFAC class translation factor GTPase superfamily. Classic translation factor GTPase family. LepA subfamily.

The protein localises to the cell inner membrane. The enzyme catalyses GTP + H2O = GDP + phosphate + H(+). Required for accurate and efficient protein synthesis under certain stress conditions. May act as a fidelity factor of the translation reaction, by catalyzing a one-codon backward translocation of tRNAs on improperly translocated ribosomes. Back-translocation proceeds from a post-translocation (POST) complex to a pre-translocation (PRE) complex, thus giving elongation factor G a second chance to translocate the tRNAs correctly. Binds to ribosomes in a GTP-dependent manner. The chain is Elongation factor 4 from Hahella chejuensis (strain KCTC 2396).